We begin with the raw amino-acid sequence, 583 residues long: Moesin/ezrin/radixin homolog 1 (583 aa).

One can recognise an FERM domain in the interval 11-301; sequence MNVRVTTMDA…GNHELYMRRR (291 aa). 2 disordered regions span residues 466–518 and 539–558; these read TTTP…RTLA and RDDT…VRQG. The segment covering 476–485 has biased composition (acidic residues); sequence EEEEDNEEEL. The segment covering 496–518 has biased composition (basic and acidic residues); sequence DYSKDFDTDEHIKDPVEERRTLA. T564 carries the post-translational modification Phosphothreonine.

In terms of assembly, interacts with cytoskeletal actin.

The protein resides in the cell junction. It localises to the adherens junction. It is found in the cell projection. The protein localises to the microvillus. Its subcellular location is the rhabdomere. The protein resides in the cell membrane. It localises to the cytoplasm. It is found in the cytoskeleton. Its function is as follows. Involved in connections of major cytoskeletal structures to the plasma membrane. In Aedes aegypti (Yellowfever mosquito), this protein is Moesin/ezrin/radixin homolog 1.